The sequence spans 670 residues: Polar flagellar hook-associated protein 2 (670 aa).

The tract at residues 226–300 is disordered; it reads PLQAPQQPDQ…RSSLRPEERI (75 aa). The segment covering 257 to 266 has biased composition (acidic residues); that stretch reads AQDDAQDDAS. The segment covering 272-283 has biased composition (low complexity); that stretch reads AAGAEAAKAGQE. The span at 284–300 shows a compositional bias: basic and acidic residues; the sequence is AIDKANQRSSLRPEERI. The stretch at 342–428 forms a coiled coil; sequence GTLTDSYVTT…AQSSFEEYLG (87 aa).

Belongs to the FliD family. In terms of assembly, homopentamer.

The protein localises to the secreted. Its subcellular location is the bacterial flagellum. Required for the morphogenesis and for the elongation of the flagellar filament by facilitating polymerization of the flagellin monomers at the tip of growing filament. Forms a capping structure, which prevents flagellin subunits (transported through the central channel of the flagellum) from leaking out without polymerization at the distal end. Important for swimming motility. This Vibrio parahaemolyticus serotype O3:K6 (strain RIMD 2210633) protein is Polar flagellar hook-associated protein 2 (fliDP).